We begin with the raw amino-acid sequence, 340 residues long: 4-hydroxy-3-methylbut-2-enyl diphosphate reductase (340 aa).

Cysteine 21 lines the [4Fe-4S] cluster pocket. Residues histidine 50 and histidine 83 each contribute to the (2E)-4-hydroxy-3-methylbut-2-enyl diphosphate site. Positions 50 and 83 each coordinate dimethylallyl diphosphate. Residues histidine 50 and histidine 83 each coordinate isopentenyl diphosphate. Cysteine 105 is a binding site for [4Fe-4S] cluster. Histidine 133 contacts (2E)-4-hydroxy-3-methylbut-2-enyl diphosphate. Histidine 133 lines the dimethylallyl diphosphate pocket. Isopentenyl diphosphate is bound at residue histidine 133. The active-site Proton donor is glutamate 135. Threonine 173 lines the (2E)-4-hydroxy-3-methylbut-2-enyl diphosphate pocket. Cysteine 203 contacts [4Fe-4S] cluster. (2E)-4-hydroxy-3-methylbut-2-enyl diphosphate is bound by residues serine 231, serine 232, asparagine 233, and serine 276. The dimethylallyl diphosphate site is built by serine 231, serine 232, asparagine 233, and serine 276. Serine 231, serine 232, asparagine 233, and serine 276 together coordinate isopentenyl diphosphate. The tract at residues 320–340 is disordered; the sequence is KARGEPLTRSATAGDRMNADR.

It belongs to the IspH family. [4Fe-4S] cluster serves as cofactor.

The enzyme catalyses isopentenyl diphosphate + 2 oxidized [2Fe-2S]-[ferredoxin] + H2O = (2E)-4-hydroxy-3-methylbut-2-enyl diphosphate + 2 reduced [2Fe-2S]-[ferredoxin] + 2 H(+). It catalyses the reaction dimethylallyl diphosphate + 2 oxidized [2Fe-2S]-[ferredoxin] + H2O = (2E)-4-hydroxy-3-methylbut-2-enyl diphosphate + 2 reduced [2Fe-2S]-[ferredoxin] + 2 H(+). Its pathway is isoprenoid biosynthesis; dimethylallyl diphosphate biosynthesis; dimethylallyl diphosphate from (2E)-4-hydroxy-3-methylbutenyl diphosphate: step 1/1. It functions in the pathway isoprenoid biosynthesis; isopentenyl diphosphate biosynthesis via DXP pathway; isopentenyl diphosphate from 1-deoxy-D-xylulose 5-phosphate: step 6/6. Its function is as follows. Catalyzes the conversion of 1-hydroxy-2-methyl-2-(E)-butenyl 4-diphosphate (HMBPP) into a mixture of isopentenyl diphosphate (IPP) and dimethylallyl diphosphate (DMAPP). Acts in the terminal step of the DOXP/MEP pathway for isoprenoid precursor biosynthesis. The protein is 4-hydroxy-3-methylbut-2-enyl diphosphate reductase of Acidothermus cellulolyticus (strain ATCC 43068 / DSM 8971 / 11B).